A 267-amino-acid chain; its full sequence is Lyso-ornithine lipid O-acyltransferase (267 aa).

A helical transmembrane segment spans residues 7 to 27; sequence IFLVVAAMVALSLSLIPFQYL.

Belongs to the 1-acyl-sn-glycerol-3-phosphate acyltransferase family. OlsA subfamily.

Its subcellular location is the membrane. The enzyme catalyses a lyso-ornithine lipid + a fatty acyl-[ACP] = an N(2)-[(3R)-3-(acyloxy)acyl]-L-ornithine lipid + holo-[ACP]. The protein operates within lipid metabolism. Catalyzes the second step in the formation of ornithine lipids, which are phosphorus-free membrane lipids. Uses acyl-acyl carrier protein (acyl-AcpP) as an acyl donor and converts lyso-ornithine lipid (LOL) into ornithine lipid (OL). In Brucella abortus (strain 2308), this protein is Lyso-ornithine lipid O-acyltransferase.